Here is a 270-residue protein sequence, read N- to C-terminus: Tetracenomycin polyketide synthesis O-methyltransferase TcmP (270 aa).

Its pathway is antibiotic biosynthesis; tetracenomycin C biosynthesis. In terms of biological role, O-methyltransferase that catalyzes the methylation of the C-9 carboxy group of tetracenomycin E (TCM E) to yield TCM A2. Catalyzes as well the following side reactions: methylation of 8-O-methyl-TCM D3 to 9-carboxymethyl-8-O-methyl-TCM D3; and of TCM B3 to 9-carboxymethyl-TCM B3. The chain is Tetracenomycin polyketide synthesis O-methyltransferase TcmP (tcmP) from Streptomyces glaucescens.